Here is a 332-residue protein sequence, read N- to C-terminus: Cytoskeleton protein RodZ (332 aa).

The Cytoplasmic portion of the chain corresponds to Met1–Gly111. In terms of domain architecture, HTH cro/C1-type spans Leu19–Leu71. The segment at residues Gln30–Asp49 is a DNA-binding region (H-T-H motif). A helical; Signal-anchor for type II membrane protein membrane pass occupies residues Trp112–Trp132. The Periplasmic segment spans residues Trp133–Glu332. Positions His149–Gln225 are disordered. 2 stretches are compositionally biased toward polar residues: residues Ser151–Gln160 and Ser168–Pro182. A compositionally biased stretch (low complexity) spans Ser190–Gln225.

The protein belongs to the RodZ family.

It localises to the cell inner membrane. In terms of biological role, cytoskeletal protein that is involved in cell-shape control through regulation of the length of the long axis. In Pectobacterium atrosepticum (strain SCRI 1043 / ATCC BAA-672) (Erwinia carotovora subsp. atroseptica), this protein is Cytoskeleton protein RodZ.